Consider the following 298-residue polypeptide: Small ribosomal subunit protein uS2 (298 aa).

The tract at residues 272–298 (EGGDWAASSAAPAGESWAEAQPTEAKW) is disordered.

It belongs to the universal ribosomal protein uS2 family. As to quaternary structure, component of the small ribosomal subunit. Mature ribosomes consist of a small (40S) and a large (60S) subunit. The 40S subunit contains about 33 different proteins and 1 molecule of RNA (18S). The 60S subunit contains about 49 different proteins and 3 molecules of RNA (25S, 5.8S and 5S). Interacts with rps21.

The protein localises to the cytoplasm. Required for the assembly and/or stability of the 40S ribosomal subunit. Required for the processing of the 20S rRNA-precursor to mature 18S rRNA in a late step of the maturation of 40S ribosomal subunits. The sequence is that of Small ribosomal subunit protein uS2 (rps0) from Aspergillus niger (strain ATCC MYA-4892 / CBS 513.88 / FGSC A1513).